The following is a 325-amino-acid chain: Ribonucleoside-diphosphate reductase small chain (325 aa).

Aspartate 76, glutamate 107, and histidine 110 together coordinate Fe cation. Tyrosine 114 is an active-site residue. Residues glutamate 170, glutamate 204, and histidine 207 each contribute to the Fe cation site.

It belongs to the ribonucleoside diphosphate reductase small chain family. Heterodimer of a large and a small subunit. Fe cation serves as cofactor.

It catalyses the reaction a 2'-deoxyribonucleoside 5'-diphosphate + [thioredoxin]-disulfide + H2O = a ribonucleoside 5'-diphosphate + [thioredoxin]-dithiol. In terms of biological role, provides the precursors necessary for DNA synthesis. Catalyzes the biosynthesis of deoxyribonucleotides from the corresponding ribonucleotides. This Encephalitozoon cuniculi (strain GB-M1) (Microsporidian parasite) protein is Ribonucleoside-diphosphate reductase small chain.